Reading from the N-terminus, the 199-residue chain is MRSFVLRARAAPTTSKALLEGVGNEAHTEILAHTMMNTMFVAQSHREDVVVHLVLESTKDYSRTITIRSNDITNIGGFHESTLIAAVARALDASVGMGKEQLREVEPGITVRTVSFERLVQELAEDHQLYMLDKKGEFVRDAEIGENPCFLLTDHIPMPKKSFNSLKRLGTEKISLGPKMLFASQCVVLIHNELDIREF.

Residues leucine 132 and cysteine 186 each contribute to the S-adenosyl-L-methionine site.

It belongs to the methyltransferase superfamily. TrmY family.

Its subcellular location is the cytoplasm. This is Putative pseudouridine methyltransferase from Vibrio parahaemolyticus serotype O3:K6 (strain RIMD 2210633).